The following is a 578-amino-acid chain: Membrane protein insertase YidC (578 aa).

The helical transmembrane segment at 3 to 23 (IQRSILIVALAVVSYLLVLQW) threads the bilayer. The disordered stretch occupies residues 34–72 (AASASMNTTQGLPDTPSASGTSSDVPTAQSSAAGSEAAD). The span at 37 to 66 (ASMNTTQGLPDTPSASGTSSDVPTAQSSAA) shows a compositional bias: polar residues. Transmembrane regions (helical) follow at residues 361–381 (LELT…FWLL), 387–407 (LIGN…LAFF), 457–477 (LGGC…YWVL), 500–520 (PFFI…MLNP), and 535–555 (PIIF…YWVV).

Belongs to the OXA1/ALB3/YidC family. Type 1 subfamily. As to quaternary structure, interacts with the Sec translocase complex via SecD. Specifically interacts with transmembrane segments of nascent integral membrane proteins during membrane integration.

It is found in the cell inner membrane. In terms of biological role, required for the insertion and/or proper folding and/or complex formation of integral membrane proteins into the membrane. Involved in integration of membrane proteins that insert both dependently and independently of the Sec translocase complex, as well as at least some lipoproteins. Aids folding of multispanning membrane proteins. This Pseudomonas aeruginosa (strain ATCC 15692 / DSM 22644 / CIP 104116 / JCM 14847 / LMG 12228 / 1C / PRS 101 / PAO1) protein is Membrane protein insertase YidC.